The chain runs to 520 residues: Sodium-dependent dicarboxylate transporter SdcS (520 aa).

14 helical membrane-spanning segments follow: residues 30-50, 55-75, 77-97, 104-124, 160-180, 207-227, 242-262, 298-318, 323-343, 362-382, 399-419, 428-448, 452-472, and 491-511; these read TGQL…LLFF, LPWK…WWIT, AIPI…GHIL, SEYG…AIAM, SMFV…LAII, IGYA…PLII, FAKW…ITWL, KVVQ…EFLL, VTSS…LFII, ELPW…KGIS, GVSP…LTEV, MILP…LLLM, AMAA…AIIF, and LISA…VLGI.

It belongs to the SLC13A/DASS transporter (TC 2.A.47) family. NADC subfamily.

It localises to the cell membrane. In terms of biological role, mediates the transport of the dicarboxylates fumarate, malate, and succinate across the cytoplasmic membrane via a Na(+)-electrochemical gradient. The chain is Sodium-dependent dicarboxylate transporter SdcS (sdcS) from Staphylococcus aureus (strain MRSA252).